The chain runs to 358 residues: MYKYKVIMTGGGTAGHVTPNLALVPALKENGFEVKYIGSKDGIEKEIIKNNNIPYFQISSGKLRRYFDLKNFSDPFKVLKGIKDANKILKKEKPDVVFSKGGFVAVPVVIAAHLRKIPVVAHESDMTPGLANKLSAPFCSKLCVTFRESLKYIKDNKGVLTGSPIRTEILNGSKEKGLEICNFNKSKEVILIMGGSLGSKIINDEIRGNLELLLKDFNIIHICGKGNLDNNLLDKVGYKQFEYVSEELPDLMSAADYIISRAGANSIFEFLALRKPMLLIPLSKKASRGDQILNANSFKNEGYALVLNEEELINSTLYNKILELKSNKKNIINAMNNMNGKNSIDLIIEVILKSIKEY.

UDP-N-acetyl-alpha-D-glucosamine contacts are provided by residues 13–15, R166, S196, and Q291; that span reads TAG.

This sequence belongs to the glycosyltransferase 28 family. MurG subfamily.

It is found in the cell membrane. The enzyme catalyses di-trans,octa-cis-undecaprenyl diphospho-N-acetyl-alpha-D-muramoyl-L-alanyl-D-glutamyl-meso-2,6-diaminopimeloyl-D-alanyl-D-alanine + UDP-N-acetyl-alpha-D-glucosamine = di-trans,octa-cis-undecaprenyl diphospho-[N-acetyl-alpha-D-glucosaminyl-(1-&gt;4)]-N-acetyl-alpha-D-muramoyl-L-alanyl-D-glutamyl-meso-2,6-diaminopimeloyl-D-alanyl-D-alanine + UDP + H(+). It functions in the pathway cell wall biogenesis; peptidoglycan biosynthesis. Cell wall formation. Catalyzes the transfer of a GlcNAc subunit on undecaprenyl-pyrophosphoryl-MurNAc-pentapeptide (lipid intermediate I) to form undecaprenyl-pyrophosphoryl-MurNAc-(pentapeptide)GlcNAc (lipid intermediate II). In Clostridium botulinum (strain Alaska E43 / Type E3), this protein is UDP-N-acetylglucosamine--N-acetylmuramyl-(pentapeptide) pyrophosphoryl-undecaprenol N-acetylglucosamine transferase.